A 306-amino-acid chain; its full sequence is Ribonuclease Z (306 aa).

The Zn(2+) site is built by His-63, His-65, Asp-67, His-68, His-141, Asp-211, and His-269. Asp-67 (proton acceptor) is an active-site residue.

The protein belongs to the RNase Z family. In terms of assembly, homodimer. Requires Zn(2+) as cofactor.

It catalyses the reaction Endonucleolytic cleavage of RNA, removing extra 3' nucleotides from tRNA precursor, generating 3' termini of tRNAs. A 3'-hydroxy group is left at the tRNA terminus and a 5'-phosphoryl group is left at the trailer molecule.. Zinc phosphodiesterase, which displays some tRNA 3'-processing endonuclease activity. Probably involved in tRNA maturation, by removing a 3'-trailer from precursor tRNA. The chain is Ribonuclease Z from Staphylococcus epidermidis (strain ATCC 12228 / FDA PCI 1200).